The primary structure comprises 62 residues: MEQRKCSFCGELLEPGTGLLFAKRDGSTYYFCSSKCKGNFDLGRLPRRTVWTEQGRIYLKKA.

Residues Cys6, Cys9, Cys32, and Cys36 each contribute to the Zn(2+) site. Residues 6 to 36 (CSFCGELLEPGTGLLFAKRDGSTYYFCSSKC) form a C4-type zinc finger.

This sequence belongs to the eukaryotic ribosomal protein eL24 family. As to quaternary structure, part of the 50S ribosomal subunit. Forms a cluster with proteins L3 and L14. It depends on Zn(2+) as a cofactor.

Its function is as follows. Binds to the 23S rRNA. This Methanococcoides burtonii (strain DSM 6242 / NBRC 107633 / OCM 468 / ACE-M) protein is Large ribosomal subunit protein eL24.